Here is a 56-residue protein sequence, read N- to C-terminus: Large ribosomal subunit protein bL33 (56 aa).

Belongs to the bacterial ribosomal protein bL33 family.

The polypeptide is Large ribosomal subunit protein bL33 (Tropheryma whipplei (strain TW08/27) (Whipple's bacillus)).